A 1835-amino-acid polypeptide reads, in one-letter code: Urea amidolyase (1835 aa).

Residues 122–129 and Lys-747 each bind ATP; that span reads GAIIVGKT. The 444-residue stretch at 632–1075 folds into the Biotin carboxylation domain; it reads LFDTVLIANR…STNILNSYQY (444 aa). The region spanning 751–948 is the ATP-grasp domain; that stretch reads RQIAQKAGVP…LVEWMIRIAA (198 aa). Ser-803 carries the post-translational modification Phosphoserine. Positions 830 and 865 each coordinate ATP. A Biotinyl-binding domain is found at 1754 to 1832; sequence DEEEDFPEGA…DSGDIVAVIE (79 aa). Lys-1798 bears the N6-biotinyllysine mark.

In terms of assembly, monomer. The cofactor is biotin.

It catalyses the reaction urea + hydrogencarbonate + ATP = urea-1-carboxylate + ADP + phosphate + H(+). It carries out the reaction urea-1-carboxylate + H2O + 3 H(+) = 2 NH4(+) + 2 CO2. Its pathway is nitrogen metabolism; urea degradation; CO(2) and NH(3) from urea (allophanate route): step 1/2. It participates in nitrogen metabolism; urea degradation; CO(2) and NH(3) from urea (allophanate route): step 2/2. Hydrolysis of urea to ammonia and CO(2). The protein is Urea amidolyase (DUR1,2) of Saccharomyces cerevisiae (strain ATCC 204508 / S288c) (Baker's yeast).